The sequence spans 599 residues: Dehydrogenase eriK (599 aa).

A signal peptide spans Met1–Ala20. Residues Thr43–Ala44 and Glu64–Gly65 contribute to the FAD site. N-linked (GlcNAc...) asparagine glycosylation occurs at Asn93. An FAD-binding site is contributed by Asn122–Tyr125. N-linked (GlcNAc...) asparagine glycosylation is found at Asn169, Asn191, Asn234, Asn260, Asn284, Asn319, Asn339, Asn353, Asn365, Asn370, Asn398, Asn456, and Asn518. FAD-binding positions include Ala569 and Thr580–Gln581.

Belongs to the GMC oxidoreductase family. Homodimer. FAD is required as a cofactor.

Functionally, dehydrogenase; part of the gene cluster that mediates the biosynthesis of erinacines, cyathane-xylosides that show unique biological activities, including leishmanicidal activity, stimulating activity for nerve growth-factor synthesis, and agonistic activity toward the kappa opioid receptor. The role of the dehydrogenase eriK within the pathway has still to be determined. The first step of the erinacines biosynthesis pathway is catalyzed by the geranylgeranyl diphosphate (GGPP) synthase eriE via conversion of farnesyl pyrophosphate and isopentyl pyrophosphate into geranylgeranyl pyrophosphate (GGPP). GGPP is then substrate of the diterpene cyclase eriG for the production of cyatha-3,12-diene. The cytochrome P450 monooxygenase eriI then hydroxylates cyatha-3,12-diene at C-14 of the seven-membered ring to produce erinacol, which is further hydroxylated at C-15 by the cytochrome P450 monooxygenase eriC to yield cyathadiol. The cytochrome P450 monooxygenase eriA then catalyzes C-11 hydroxylation in the presence of the short chain dehydrogenase/reductase (SDR) eriH, which leads to the production of cyathatriol. The acetyltransferase eriL converts cyathatriol into 11-O-acetyl-cyathatriol. The SDR eriH catalyzes further oxidation of 11-O-acetyl-cyathatriol into 1-O-acetylcyathin A3. Finally, the glycosyl transferase eriJ tranfers xylose from UDP-xylose onto C-14 of 11-O-acetyl-cyathatriol to form eracine Q. EriJ is also able to convert 11-O-acetyl-cyathatriol to eracine Q2 by using UDP-D-glucose as cosubstrate, but at a lower rate. In Hericium erinaceus (Lion's mane mushroom), this protein is Dehydrogenase eriK.